The sequence spans 300 residues: O-methyltransferase phiE (300 aa).

Residues 130 to 131 (DL) and 157 to 158 (DV) each bind S-adenosyl-L-methionine.

This sequence belongs to the class I-like SAM-binding methyltransferase superfamily. In terms of assembly, homodimer.

It catalyses the reaction phomoidride A + S-adenosyl-L-methionine = (-)-phomoidride B + methanol + S-adenosyl-L-homocysteine + H(+). Its pathway is secondary metabolite biosynthesis. Functionally, O-methyltransferase; part of the gene cluster that mediates the biosynthesis of the antihypercholesterolemic agents phomoidrides which are dimeric anhydrides. Within the pathway, phiE catalyzes the acetalization reaction that converts phomoidride A to phomoidride B. The pathway begins with the highly reducing polyketide synthase phiA that catalyzes the formation of a C12-fatty acyl-ACP, starting from one acetate and 5 malonate units. The hydrolase phiM is involved in the release of the C12-fatty acyl chain from phiA. The alkylcitrate synthase (ACS) phiJ and the alkylcitrate dehydratase (ACDH) phiI then give rise to decarboxylated monomeric anhydrides by coupling the C12-fatty acyl chain with oxalacetic acid. The cyclase phiC is responsible for the dimerization of the monomeric anhydrides which leads to the production of prephomoidride that contains the characteristic bicyclo[4.3.1]deca-1,6-diene system of phomoidrides. Iterative oxidation catalyzed by the alpha-ketoglutarate-dependent dioxygenase phiK produced then phomoidride A. Finally, the methyltransferase phiE converts phomoidride A to phomoidride B via an acetalization reaction. The phosphatidylethanolamine-binding protein phiB and phiN are not essential for dimerization and their functions have still to be determined. This Fungal sp. (strain ATCC 74256) protein is O-methyltransferase phiE.